Here is a 204-residue protein sequence, read N- to C-terminus: N-(5'-phosphoribosyl)anthranilate isomerase (204 aa).

This sequence belongs to the TrpF family.

It catalyses the reaction N-(5-phospho-beta-D-ribosyl)anthranilate = 1-(2-carboxyphenylamino)-1-deoxy-D-ribulose 5-phosphate. It functions in the pathway amino-acid biosynthesis; L-tryptophan biosynthesis; L-tryptophan from chorismate: step 3/5. This is N-(5'-phosphoribosyl)anthranilate isomerase from Bacillus thuringiensis (strain Al Hakam).